Reading from the N-terminus, the 376-residue chain is Riboflavin biosynthesis protein RibD (376 aa).

The segment at 1-150 (MEDFSEQQLF…QPYLYQRTHN (150 aa)) is deaminase. The CMP/dCMP-type deaminase domain maps to 6-128 (EQQLFFMRRA…MLRQAGIQVY (123 aa)). H55 contributes to the Zn(2+) binding site. E57 serves as the catalytic Proton donor. 2 residues coordinate Zn(2+): C80 and C89. Positions 151–376 (FPWTILKSAA…SPQVFEPIRN (226 aa)) are reductase. Position 159 (A159) interacts with NADP(+). S173 is a substrate binding site. Position 175 (W175) interacts with NADP(+). A substrate-binding site is contributed by R189. 2 residues coordinate NADP(+): T201 and D205. L209 and R212 together coordinate substrate. S230 is a binding site for NADP(+). E300 lines the substrate pocket. 302 to 308 (GTTLHTS) is a binding site for NADP(+).

The protein in the N-terminal section; belongs to the cytidine and deoxycytidylate deaminase family. It in the C-terminal section; belongs to the HTP reductase family. Zn(2+) is required as a cofactor.

It catalyses the reaction 2,5-diamino-6-hydroxy-4-(5-phosphoribosylamino)-pyrimidine + H2O + H(+) = 5-amino-6-(5-phospho-D-ribosylamino)uracil + NH4(+). The catalysed reaction is 5-amino-6-(5-phospho-D-ribitylamino)uracil + NADP(+) = 5-amino-6-(5-phospho-D-ribosylamino)uracil + NADPH + H(+). The protein operates within cofactor biosynthesis; riboflavin biosynthesis; 5-amino-6-(D-ribitylamino)uracil from GTP: step 2/4. It participates in cofactor biosynthesis; riboflavin biosynthesis; 5-amino-6-(D-ribitylamino)uracil from GTP: step 3/4. Converts 2,5-diamino-6-(ribosylamino)-4(3h)-pyrimidinone 5'-phosphate into 5-amino-6-(ribosylamino)-2,4(1h,3h)-pyrimidinedione 5'-phosphate. This is Riboflavin biosynthesis protein RibD (ribD) from Chlamydia pneumoniae (Chlamydophila pneumoniae).